Reading from the N-terminus, the 199-residue chain is Ribosome maturation factor RimM (199 aa).

Positions 93–169 constitute a PRC barrel domain; sequence DDEYYHADLI…IELPDEIDGE (77 aa). Residues 164 to 199 are disordered; that stretch reads DEIDGEDRASADESASAEDDAAAPNSARHPRESGDP.

Belongs to the RimM family. In terms of assembly, binds ribosomal protein uS19.

Its subcellular location is the cytoplasm. Its function is as follows. An accessory protein needed during the final step in the assembly of 30S ribosomal subunit, possibly for assembly of the head region. Essential for efficient processing of 16S rRNA. May be needed both before and after RbfA during the maturation of 16S rRNA. It has affinity for free ribosomal 30S subunits but not for 70S ribosomes. The protein is Ribosome maturation factor RimM of Bradyrhizobium sp. (strain ORS 278).